Reading from the N-terminus, the 249-residue chain is Mediator of RNA polymerase II transcription subunit 19 (249 aa).

Disordered regions lie at residues 1–68 and 178–249; these read MEGF…SSRR and QPPK…SGLR. A compositionally biased stretch (low complexity) spans 9–18; that stretch reads AASEPSSIPS. The segment covering 45–56 has biased composition (pro residues); the sequence is VPGPPLPIPPPL. Basic residues-rich tracts occupy residues 179-190 and 221-233; these read PPKKKNKKHKQS and RRKKKDKKKKKSR.

The protein belongs to the Mediator complex subunit 19 family. As to quaternary structure, component of the Mediator complex.

It localises to the nucleus. Functionally, component of the Mediator complex, a coactivator involved in the regulated transcription of nearly all RNA polymerase II-dependent genes. Mediator functions as a bridge to convey information from gene-specific regulatory proteins to the basal RNA polymerase II transcription machinery. Mediator is recruited to promoters by direct interactions with regulatory proteins and serves as a scaffold for the assembly of a functional preinitiation complex with RNA polymerase II and the general transcription factors. The sequence is that of Mediator of RNA polymerase II transcription subunit 19 (med19) from Xenopus tropicalis (Western clawed frog).